Here is a 290-residue protein sequence, read N- to C-terminus: MGSRSRTPSPSGKRRHHKSKHKKRSKSHHDHERPSTRTDRDKSSEVNNHGRHRERDRDRERDRHRSDRHTERDYRHSPSILKSRKRSSSSSSDSQYSEQESQRSKQKRSRFKKLDEQNQMQVERLAEMERQRRAKELEQKTIEEEAAKRIEMLVKKRVEEELEKRRDEIEQEVNRRVETAKAEMEREMMLELERRREQIREEERRREEDEKQKREELEEILAENNRKIEEAQRKLAEERLAIIEEQRLMDEERQRMRKEQEKRVKEEQKVILGKNNSRPKLSFSLKPGAL.

Residues 1–10 (MGSRSRTPSP) show a composition bias toward polar residues. Disordered stretches follow at residues 1–137 (MGSR…AKEL), 193–216 (ERRR…KREE), and 249–290 (MDEE…PGAL). A compositionally biased stretch (basic residues) spans 12–28 (GKRRHHKSKHKKRSKSH). 2 stretches are compositionally biased toward basic and acidic residues: residues 29 to 44 (HDHE…DKSS) and 53 to 76 (RERD…DYRH). 2 positions are modified to phosphoserine: Ser77 and Ser79. Over residues 88–99 (SSSSSDSQYSEQ) the composition is skewed to low complexity. Residues 111 to 269 (FKKLDEQNQM…QEKRVKEEQK (159 aa)) adopt a coiled-coil conformation. A compositionally biased stretch (basic and acidic residues) spans 124–137 (RLAEMERQRRAKEL). The segment covering 249 to 269 (MDEERQRMRKEQEKRVKEEQK) has biased composition (basic and acidic residues).

The protein belongs to the ARGLU1 family. Associates with the U1-snRNP complex; the interaction is enhanced by binding of Arglu1 to a stable intronic sequence RNA (sisRNA) produced from the Arglu1 gene by premature cleavage.

The protein localises to the nucleus. Its subcellular location is the nucleus speckle. Post-transcriptional regulator of gene expression; modulates splicing and premature cleavage at cryptic polyadenylation sites of its own pre-mRNA through binding and regulation of the U1-snRNP complex. This Drosophila melanogaster (Fruit fly) protein is Arginine and glutamate-rich protein 1.